We begin with the raw amino-acid sequence, 418 residues long: Putative ion-transport protein YfeO (418 aa).

12 consecutive transmembrane segments (helical) span residues 10-30, 54-74, 99-119, 120-140, 149-169, 186-206, 223-243, 258-278, 300-320, 322-342, 343-363, and 371-391; these read LLLS…LIMV, DSPL…GLVI, ALPG…SLGP, EHPI…RLLP, ILAS…AALI, LFAP…FFHP, ILSG…AVWC, VFVL…GGPV, DYFL…ASGF, GGRI…LHEH, VPAV…VLVV, and LFMA…CIVM.

The protein belongs to the chloride channel (TC 2.A.49) family.

Its subcellular location is the cell membrane. This Escherichia coli O127:H6 (strain E2348/69 / EPEC) protein is Putative ion-transport protein YfeO.